Reading from the N-terminus, the 645-residue chain is Nucleolar GTP-binding protein 1 (645 aa).

An OBG-type G domain is found at 168–340 (RTLLICGYPN…VRNKACEKLL (173 aa)). Residues 174–181 (GYPNVGKS), 220–224 (DTPGI), and 288–291 (NKTD) each bind GTP. The segment at 567–645 (GQNDSMASGS…KRGIGKSDFR (79 aa)) is disordered. Residues 612–624 (NRDARQGEADRHA) are compositionally biased toward basic and acidic residues.

The protein belongs to the TRAFAC class OBG-HflX-like GTPase superfamily. OBG GTPase family. NOG subfamily.

It is found in the nucleus. Its subcellular location is the nucleolus. In terms of biological role, involved in the biogenesis of the 60S ribosomal subunit. This is Nucleolar GTP-binding protein 1 (NOG1) from Candida glabrata (strain ATCC 2001 / BCRC 20586 / JCM 3761 / NBRC 0622 / NRRL Y-65 / CBS 138) (Yeast).